Reading from the N-terminus, the 476-residue chain is UDP-glycosyltransferase 71C3 (476 aa).

UDP-alpha-D-glucose is bound by residues Ser-290, 349–351, 366–374, and 388–391; these read APQ, HCGWNSVLE, and YAEQ.

The protein belongs to the UDP-glycosyltransferase family.

Possesses low quercetin 3-O-glucosyltransferase activity in vitro. This chain is UDP-glycosyltransferase 71C3 (UGT71C3), found in Arabidopsis thaliana (Mouse-ear cress).